Here is a 269-residue protein sequence, read N- to C-terminus: Tryptophan synthase alpha chain (269 aa).

Catalysis depends on proton acceptor residues Glu-49 and Asp-60.

The protein belongs to the TrpA family. As to quaternary structure, tetramer of two alpha and two beta chains.

The catalysed reaction is (1S,2R)-1-C-(indol-3-yl)glycerol 3-phosphate + L-serine = D-glyceraldehyde 3-phosphate + L-tryptophan + H2O. It participates in amino-acid biosynthesis; L-tryptophan biosynthesis; L-tryptophan from chorismate: step 5/5. Functionally, the alpha subunit is responsible for the aldol cleavage of indoleglycerol phosphate to indole and glyceraldehyde 3-phosphate. This chain is Tryptophan synthase alpha chain, found in Delftia acidovorans (strain DSM 14801 / SPH-1).